The sequence spans 470 residues: Uronate isomerase (470 aa).

The protein belongs to the metallo-dependent hydrolases superfamily. Uronate isomerase family.

It carries out the reaction D-glucuronate = D-fructuronate. The catalysed reaction is aldehydo-D-galacturonate = keto-D-tagaturonate. It participates in carbohydrate metabolism; pentose and glucuronate interconversion. The polypeptide is Uronate isomerase (Cronobacter sakazakii (strain ATCC BAA-894) (Enterobacter sakazakii)).